The primary structure comprises 548 residues: Membrane protein insertase YidC (548 aa).

Residues 6 to 26 (NLLVIALLFVSFMIWQAWEQD) form a helical membrane-spanning segment. The disordered stretch occupies residues 28–55 (NPQPQAQQTTQTTTTAAGSAADQGVPAS). Positions 30–50 (QPQAQQTTQTTTTAAGSAADQ) are enriched in low complexity. 4 consecutive transmembrane segments (helical) span residues 350–370 (FVGNWGFSIIIITFIVRGIMY), 420–440 (LGGCFPLLIQMPIFLALYYML), 458–478 (LSAQDPYYILPILMGVTMFFI), and 499–519 (PVIFTVFFLWFPSGLVLYYIV).

This sequence belongs to the OXA1/ALB3/YidC family. Type 1 subfamily. In terms of assembly, interacts with the Sec translocase complex via SecD. Specifically interacts with transmembrane segments of nascent integral membrane proteins during membrane integration.

The protein resides in the cell inner membrane. Its function is as follows. Required for the insertion and/or proper folding and/or complex formation of integral membrane proteins into the membrane. Involved in integration of membrane proteins that insert both dependently and independently of the Sec translocase complex, as well as at least some lipoproteins. Aids folding of multispanning membrane proteins. The chain is Membrane protein insertase YidC from Shigella flexneri.